A 286-amino-acid polypeptide reads, in one-letter code: Tungstate-binding protein TupA (286 aa).

An N-terminal signal peptide occupies residues 1–20; it reads MKRLLSIITAVMMLALALTG. A lipid anchor (N-palmitoyl cysteine) is attached at Cys21. The S-diacylglycerol cysteine moiety is linked to residue Cys21.

In terms of assembly, monomer. The complex is composed of two ATP-binding proteins (TupC), two transmembrane proteins (TupB) and a solute-binding protein (TupA).

It localises to the cell membrane. Its function is as follows. Part of an ABC transporter complex involved in tungstate uptake. Specifically binds tungstate. This Peptoclostridium acidaminophilum (Eubacterium acidaminophilum) protein is Tungstate-binding protein TupA.